We begin with the raw amino-acid sequence, 1019 residues long: Clotting factor C (1019 aa).

A signal peptide spans 1–25 (MVLASFLVSGLVLGILAQQMRPVQS). The EGF-like domain occupies 102-137 (YGTWCSGECQCKNGGICDQRTGACTCRDRYEGAHCE). Disulfide bonds link cysteine 110/cysteine 118, cysteine 112/cysteine 125, cysteine 127/cysteine 136, cysteine 142/cysteine 182, cysteine 168/cysteine 195, cysteine 199/cysteine 241, cysteine 227/cysteine 254, cysteine 260/cysteine 308, cysteine 294/cysteine 321, cysteine 331/cysteine 350, cysteine 354/cysteine 374, cysteine 464/cysteine 564, cysteine 538/cysteine 556, cysteine 576/cysteine 621, cysteine 607/cysteine 634, and cysteine 720/cysteine 748. Sushi domains are found at residues 140–197 (KGCP…KCIR), 198–256 (ECAK…QCKK), and 258–323 (VFCP…SCVK). Positions 325–421 (ADREVDCDSK…EELKSLARSF (97 aa)) constitute an LCCL domain. The C-type lectin domain maps to 436–568 (CPDGWFEVEE…PSSFACMMDL (133 aa)). 2 N-linked (GlcNAc...) asparagine glycosylation sites follow: asparagine 523 and asparagine 534. Sushi domains are found at residues 574 to 636 (AKCD…RCIK) and 689 to 750 (PRSS…SCIP). Residues asparagine 624, asparagine 740, and asparagine 767 are each glycosylated (N-linked (GlcNAc...) asparagine). The Peptidase S1 domain occupies 763–1019 (IWNGNSTEIG…VFLSWIRQFI (257 aa)). The cysteines at positions 794 and 810 are disulfide-linked. Active-site charge relay system residues include histidine 809 and aspartate 865. Asparagine 912 carries N-linked (GlcNAc...) asparagine glycosylation. Cysteine 932 and cysteine 951 are joined by a disulfide. Aspartate 960 is a binding site for substrate. A disulfide bond links cysteine 962 and cysteine 996. Catalysis depends on serine 966, which acts as the Charge relay system.

Belongs to the peptidase S1 family. In terms of assembly, heterodimer of a light chain and a heavy chain linked by a disulfide bond. Forms a covalent heterodimer with intracellular coagulation inhibitor 1/LICI-1. Forms a covalent heterodimer with intracellular coagulation inhibitor 2/LICI-2. Post-translationally, N-glycosylated. Lipopolysaccharide (LPS) activates clotting factor C by inducing the proteolytic cleavage of the clotting factor C light chain into clotting factor C chains A and B. Clotting factor C chains heavy, A and B remain associated via interchain disulfide bonds. Expressed in hemocytes (at protein level).

Its subcellular location is the secreted. It catalyses the reaction Selective cleavage of 103-Arg-|-Ser-104 and 124-Ile-|-Ile-125 bonds in Limulus clotting factor B to form activated factor B. Cleavage of -Pro-Arg-|-Xaa- bonds in synthetic substrates.. With respect to regulation, activated by Gram-negative bacterial lipopolysaccharides. Inhibited by intracellular coagulation inhibitor 1/LICI-1 and to a lesser extent by intracellular coagulation inhibitors 2/LICI-2 and 3/LICI-3. Inhibited by the small molecule diisopropyl fluorophosphate (DFP). Its function is as follows. This enzyme is closely associated with an endotoxin-sensitive hemolymph coagulation system which may play important roles in both hemostasis and host defense mechanisms. Its active form catalyzes the activation of clotting factor B. This chain is Clotting factor C, found in Tachypleus tridentatus (Japanese horseshoe crab).